We begin with the raw amino-acid sequence, 491 residues long: Protein nucleotidyltransferase YdiU (491 aa).

Positions 88, 90, 91, 111, 123, 124, 174, and 181 each coordinate ATP. The active-site Proton acceptor is Asp250. Residues Asn251 and Asp260 each coordinate Mg(2+). Residue Asp260 coordinates ATP. Residues 466–484 (DDQPDRADYAEPPQPEERV) show a composition bias toward basic and acidic residues. A disordered region spans residues 466–491 (DDQPDRADYAEPPQPEERVLQTFCGT).

It belongs to the SELO family. Requires Mg(2+) as cofactor. It depends on Mn(2+) as a cofactor.

The enzyme catalyses L-seryl-[protein] + ATP = 3-O-(5'-adenylyl)-L-seryl-[protein] + diphosphate. It carries out the reaction L-threonyl-[protein] + ATP = 3-O-(5'-adenylyl)-L-threonyl-[protein] + diphosphate. It catalyses the reaction L-tyrosyl-[protein] + ATP = O-(5'-adenylyl)-L-tyrosyl-[protein] + diphosphate. The catalysed reaction is L-histidyl-[protein] + UTP = N(tele)-(5'-uridylyl)-L-histidyl-[protein] + diphosphate. The enzyme catalyses L-seryl-[protein] + UTP = O-(5'-uridylyl)-L-seryl-[protein] + diphosphate. It carries out the reaction L-tyrosyl-[protein] + UTP = O-(5'-uridylyl)-L-tyrosyl-[protein] + diphosphate. Its function is as follows. Nucleotidyltransferase involved in the post-translational modification of proteins. It can catalyze the addition of adenosine monophosphate (AMP) or uridine monophosphate (UMP) to a protein, resulting in modifications known as AMPylation and UMPylation. The sequence is that of Protein nucleotidyltransferase YdiU from Bradyrhizobium sp. (strain ORS 278).